A 222-amino-acid polypeptide reads, in one-letter code: UPF0688 protein C1orf174 homolog (222 aa).

Disordered stretches follow at residues 23–57 (STSL…RTSK) and 98–158 (EDGA…EPVP). Over residues 33-48 (ASSTSAKTTCLASSSH) the composition is skewed to polar residues. The span at 121-131 (VSEEPSVKAEE) shows a compositional bias: basic and acidic residues. Serine 172 carries the phosphoserine modification.

It belongs to the UPF0688 family.

The protein localises to the nucleus. This chain is UPF0688 protein C1orf174 homolog, found in Rattus norvegicus (Rat).